A 453-amino-acid chain; its full sequence is Macrophage scavenger receptor types I and II (453 aa).

Residues 1–50 (MAQWDDFPDQQEDTDSCTESVKFDARSVTALLPPHPKNGPTLQERMKSYK) lie on the Cytoplasmic side of the membrane. Serine 27 is modified (phosphoserine). The helical; Signal-anchor for type II membrane protein transmembrane segment at 51 to 76 (TALITLYLIVFVVLVPIIGIVAAQLL) threads the bilayer. The interval 77–108 (KWETKNCTVGSVNADISPSPEGKGNGSEDEMR) is spacer. At 77-453 (KWETKNCTVG…DEDAGVTCTT (377 aa)) the chain is on the extracellular side. N-linked (GlcNAc...) asparagine glycosylation is found at asparagine 82, asparagine 101, asparagine 142, asparagine 183, asparagine 220, asparagine 248, and asparagine 266. The stretch at 194–255 (ETLNGRVQEN…LNNITNDLRL (62 aa)) forms a coiled coil. 2 disordered regions span residues 267-295 (ITLL…PGFP) and 313-349 (PGVR…QRQS). The region spanning 272–343 (GPPGPPGEKG…KGQKGEKGSG (72 aa)) is the Collagen-like domain. The SRCR domain occupies 352–452 (VRLVGGSGPH…HDEDAGVTCT (101 aa)). Cystine bridges form between cysteine 377–cysteine 441, cysteine 390–cysteine 451, and cysteine 421–cysteine 431.

In terms of assembly, homotrimer. Interacts with MYO18A.

It is found in the membrane. In terms of biological role, membrane glycoproteins implicated in the pathologic deposition of cholesterol in arterial walls during atherogenesis. Two types of receptor subunits exist. These receptors mediate the endocytosis of a diverse group of macromolecules, including modified low density lipoproteins (LDL). The sequence is that of Macrophage scavenger receptor types I and II (MSR1) from Bos taurus (Bovine).